The sequence spans 130 residues: Phosphomevalonate dehydratase small subunit (130 aa).

Residue Ser62 is the Proton acceptor of the active site.

This sequence belongs to the AcnX type II small subunit family. Heterodimer composed of a large subunit (PMDh-L) and a small subunit (PMDh-S).

The enzyme catalyses (R)-5-phosphomevalonate = (2E)-3-methyl-5-phosphooxypent-2-enoate + H2O. Its pathway is isoprenoid biosynthesis; isopentenyl diphosphate biosynthesis via mevalonate pathway. Component of a hydro-lyase that catalyzes the dehydration of mevalonate 5-phosphate (MVA5P) to form trans-anhydromevalonate 5-phosphate (tAHMP). Involved in the archaeal mevalonate (MVA) pathway, which provides fundamental precursors for isoprenoid biosynthesis, such as isopentenyl diphosphate (IPP) and dimethylallyl diphosphate (DMAPP). This chain is Phosphomevalonate dehydratase small subunit, found in Pyrococcus abyssi (strain GE5 / Orsay).